A 304-amino-acid chain; its full sequence is Putative S-adenosyl-L-methionine-dependent methyltransferase MAP_4189c (304 aa).

S-adenosyl-L-methionine is bound by residues D130 and D159 to L160.

Belongs to the UPF0677 family.

Functionally, exhibits S-adenosyl-L-methionine-dependent methyltransferase activity. The protein is Putative S-adenosyl-L-methionine-dependent methyltransferase MAP_4189c of Mycolicibacterium paratuberculosis (strain ATCC BAA-968 / K-10) (Mycobacterium paratuberculosis).